Consider the following 167-residue polypeptide: MTHRSSRLEVGPVARGDVATIEHAELPPGWVLTTSGRISGVTEPGELSVHYPFPIADLVALDDALTYSSRACQVRFAIYLGDLGRDTAARAREILGKVPTPDNAVLLAVSPNQCAIEVVYGSQVRGRGAESAAPLGVAAASSAFEQGELVDGLISAIRVLSAGIAPG.

This is an uncharacterized protein from Mycobacterium tuberculosis (strain CDC 1551 / Oshkosh).